Consider the following 775-residue polypeptide: Dipeptidyl peptidase 4 (775 aa).

Positions 1 to 15 (MKFLSLLLLVGVAQA) are cleaved as a signal peptide. N81, N111, and N219 each carry an N-linked (GlcNAc...) asparagine glycan. Catalysis depends on charge relay system residues S613, D690, and H725. A glycan (N-linked (GlcNAc...) asparagine) is linked at N731.

The protein belongs to the peptidase S9B family.

The protein resides in the secreted. It carries out the reaction Release of an N-terminal dipeptide, Xaa-Yaa-|-Zaa-, from a polypeptide, preferentially when Yaa is Pro, provided Zaa is neither Pro nor hydroxyproline.. Extracellular dipeptidyl-peptidase which removes N-terminal dipeptides sequentially from polypeptides having unsubstituted N-termini provided that the penultimate residue is proline. Contributes to pathogenicity. The sequence is that of Dipeptidyl peptidase 4 (DPP4) from Arthroderma otae (strain ATCC MYA-4605 / CBS 113480) (Microsporum canis).